A 449-amino-acid polypeptide reads, in one-letter code: Tripartite motif-containing protein 64B (449 aa).

The RING-type zinc-finger motif lies at 15–56 (CCICVNYFIDPVTIDCGHSFCRPCLCLCSEEGRAPMRCPSCR). A B box-type zinc finger spans residues 87-128 (SSDNICVLHEETKELFCEADKRLLCGPCSESPEHMAHSHSPI). C92, H95, C114, and H120 together coordinate Zn(2+). Positions 189–225 (LDEEEQRHLQALEREAEELFQQLQDSQVRMTQHLERM) form a coiled coil. Positions 268-449 (ELTSWCITGV…LRPFFCFGCT (182 aa)) constitute a B30.2/SPRY domain.

This sequence belongs to the TRIM/RBCC family.

The polypeptide is Tripartite motif-containing protein 64B (TRIM64B) (Homo sapiens (Human)).